Consider the following 106-residue polypeptide: MKKKTKIILSLLAALIVILIVLPVLSPVVFTASSEKGAIRHEIYKRGYPYQSYFAVLQKREGDNESGNLYYVNWLDWKDETGQTPHLCYSKKSSDGEYEVSCGTGP.

Positions 1-31 (MKKKTKIILSLLAALIVILIVLPVLSPVVFT) are cleaved as a signal peptide.

This is an uncharacterized protein from Bacillus subtilis (strain 168).